We begin with the raw amino-acid sequence, 126 residues long: MTKISVGLQLVTRDSREKLNNIVIKSSLRLNRSNPNISELCFLKTCHLCNKQLHQDKDVYMYRGDLGFCSRECRESQMLIDDRKELEASTKMMLASYRRCNNGAGKSESRNLFDDLRRRRQLFIVP.

The segment at 41-85 (CFLKTCHLCNKQLHQDKDVYMYRGDLGFCSRECRESQMLIDDRKE) adopts an FLZ-type zinc-finger fold.

Belongs to the FLZ family. As to quaternary structure, interacts with KIN10 and KIN11 via its FLZ-type zinc finger domain. Forms heterodimer with FLZ2 in vitro.

Its subcellular location is the nucleus. It is found in the cytoplasm. Functionally, may act as an adapter to facilitate the interaction of SnRK1 complex with effector proteins, conferring tissue- and stimulus-type specific differences in the SnRK1 regulation pathway. The sequence is that of FCS-Like Zinc finger 17 from Arabidopsis thaliana (Mouse-ear cress).